Here is a 269-residue protein sequence, read N- to C-terminus: NAD kinase (269 aa).

Catalysis depends on D45, which acts as the Proton acceptor. Residues 45–46 (DG), 122–123 (NE), R149, D151, and A186 each bind NAD(+).

The protein belongs to the NAD kinase family. The cofactor is a divalent metal cation.

It localises to the cytoplasm. The enzyme catalyses NAD(+) + ATP = ADP + NADP(+) + H(+). In terms of biological role, involved in the regulation of the intracellular balance of NAD and NADP, and is a key enzyme in the biosynthesis of NADP. Catalyzes specifically the phosphorylation on 2'-hydroxyl of the adenosine moiety of NAD to yield NADP. This is NAD kinase from Staphylococcus haemolyticus (strain JCSC1435).